A 1342-amino-acid chain; its full sequence is Putative aldehyde oxidase-like protein (1342 aa).

The tract at residues 1–23 (MSDCNSGGGERRPNARATDAPPV) is disordered. The FAD-binding PCMH-type domain maps to 221-408 (ISSPREGWYC…LSIFIPHWAS (188 aa)).

This sequence belongs to the xanthine dehydrogenase family.

The chain is Putative aldehyde oxidase-like protein from Oryza sativa subsp. japonica (Rice).